The following is a 257-amino-acid chain: Protein THYLAKOID ASSEMBLY 8-like, chloroplastic (257 aa).

The transit peptide at methionine 1–serine 55 directs the protein to the chloroplast. PPR repeat units follow at residues aspartate 142 to proline 176 and aspartate 177 to proline 211.

Belongs to the PPR family. P subfamily.

It localises to the plastid. The protein localises to the chloroplast. In terms of biological role, binds weakly to specific single strand RNA (ssRNA). This is Protein THYLAKOID ASSEMBLY 8-like, chloroplastic from Arabidopsis thaliana (Mouse-ear cress).